An 802-amino-acid chain; its full sequence is Mitochondrial inner membrane m-AAA protease component AFG3L2 (802 aa).

Residues 1-38 (MAHRCLLLWSRGGCRRGLPPLLVPRGCLGPDRRPCLRT) constitute a mitochondrion transit peptide. A propeptide spans 39–66 (LYQYATVQTASSRRSLLRDVIAAYQRFC) (removed in mature form). Residues 76-124 (YFPNGKNGKKASEPKEAVGEKKEPQPSGPQPSGGAGGGGGKRRGKKEDS) are disordered. The segment covering 85-99 (KASEPKEAVGEKKEP) has biased composition (basic and acidic residues). Lys116 is modified (N6-succinyllysine). The next 2 helical transmembrane spans lie at 142 to 162 (FRMY…YFVF) and 250 to 270 (GSFL…LYTI). 8 residues coordinate ATP: Val309, Ala310, Thr351, Gly352, Lys353, Thr354, Leu355, and His489. His573 is a Zn(2+) binding site. Residue Glu574 is part of the active site. The Zn(2+) site is built by His577 and Asp648. The interval 759–802 (VEGTGSLDEDTSLPEGLQDWNKEREKEEKKEKEKEEPLNEKVVS) is disordered. A compositionally biased stretch (basic and acidic residues) spans 778-802 (WNKEREKEEKKEKEKEEPLNEKVVS).

In the N-terminal section; belongs to the AAA ATPase family. The protein in the C-terminal section; belongs to the peptidase M41 family. As to quaternary structure, homohexamer. Forms heterohexamers with SPG7 and AFG3L1. The m-AAA protease is either composed of homohexamers of AFG3L2 or heterohexamers of AFG3L1, AFG3L2 and/or SPG7. Interacts with MAIP1. Interacts with DNAJC19. Interacts with PHB2. Zn(2+) serves as cofactor. In terms of processing, upon import into the mitochondrion, the N-terminal transit peptide is cleaved to generate an intermediate form which undergoes autocatalytic proteolytic processing to generate the proteolytically active mature form. Highly expressed in the cerebellar Purkinje cells.

The protein resides in the mitochondrion inner membrane. It carries out the reaction ATP + H2O = ADP + phosphate + H(+). Catalytic component of the m-AAA protease, a protease that plays a key role in proteostasis of inner mitochondrial membrane proteins, and which is essential for axonal and neuron development. AFG3L2 possesses both ATPase and protease activities: the ATPase activity is required to unfold substrates, threading them into the internal proteolytic cavity for hydrolysis into small peptide fragments. The m-AAA protease carries out protein quality control in the inner membrane of the mitochondria by mediating degradation of mistranslated or misfolded polypeptides. The m-AAA protease complex also promotes the processing and maturation of mitochondrial proteins, such as MRPL32/bL32m, PINK1 and SP7. Mediates protein maturation of the mitochondrial ribosomal subunit MRPL32/bL32m by catalyzing the cleavage of the presequence of MRPL32/bL32m prior to assembly into the mitochondrial ribosome. Required for SPG7 maturation into its active mature form after SPG7 cleavage by mitochondrial-processing peptidase (MPP). Required for the maturation of PINK1 into its 52kDa mature form after its cleavage by mitochondrial-processing peptidase (MPP). Acts as a regulator of calcium in neurons by mediating degradation of SMDT1/EMRE before its assembly with the uniporter complex, limiting the availability of SMDT1/EMRE for MCU assembly and promoting efficient assembly of gatekeeper subunits with MCU. Promotes the proteolytic degradation of GHITM upon hyperpolarization of mitochondria: progressive GHITM degradation leads to respiratory complex I degradation and broad reshaping of the mitochondrial proteome by AFG3L2. Also acts as a regulator of mitochondrial glutathione homeostasis by mediating cleavage and degradation of SLC25A39. SLC25A39 cleavage is prevented when SLC25A39 binds iron-sulfur. Involved in the regulation of OMA1-dependent processing of OPA1. May act by mediating processing of OMA1 precursor, participating in OMA1 maturation. The polypeptide is Mitochondrial inner membrane m-AAA protease component AFG3L2 (Mus musculus (Mouse)).